Consider the following 208-residue polypeptide: Thymidylate kinase (208 aa).

9–16 (GGEGCGKS) is an ATP binding site.

It belongs to the thymidylate kinase family.

It catalyses the reaction dTMP + ATP = dTDP + ADP. Its function is as follows. Phosphorylation of dTMP to form dTDP in both de novo and salvage pathways of dTTP synthesis. The protein is Thymidylate kinase of Dehalococcoides mccartyi (strain CBDB1).